The following is a 259-amino-acid chain: PF03932 family protein CutC (259 aa).

This sequence belongs to the CutC family. In terms of assembly, homodimer.

It is found in the cytoplasm. The polypeptide is PF03932 family protein CutC (Salmonella typhi).